Here is a 577-residue protein sequence, read N- to C-terminus: Isocitrate dehydrogenase kinase/phosphatase (577 aa).

Residues 324–330 (APGIRGL) and lysine 345 contribute to the ATP site. Aspartate 380 is a catalytic residue.

The protein belongs to the AceK family.

It is found in the cytoplasm. It catalyses the reaction L-seryl-[isocitrate dehydrogenase] + ATP = O-phospho-L-seryl-[isocitrate dehydrogenase] + ADP + H(+). Functionally, bifunctional enzyme which can phosphorylate or dephosphorylate isocitrate dehydrogenase (IDH) on a specific serine residue. This is a regulatory mechanism which enables bacteria to bypass the Krebs cycle via the glyoxylate shunt in response to the source of carbon. When bacteria are grown on glucose, IDH is fully active and unphosphorylated, but when grown on acetate or ethanol, the activity of IDH declines drastically concomitant with its phosphorylation. The sequence is that of Isocitrate dehydrogenase kinase/phosphatase from Pseudoalteromonas atlantica (strain T6c / ATCC BAA-1087).